The sequence spans 235 residues: Octanoyltransferase (235 aa).

The region spanning 44–231 (DTTADELWLV…HQVGLPNENN (188 aa)) is the BPL/LPL catalytic domain. Substrate-binding positions include 83-90 (RGGQVTYH), 150-152 (SLG), and 163-165 (GLA). Cysteine 181 acts as the Acyl-thioester intermediate in catalysis.

It belongs to the LipB family.

Its subcellular location is the cytoplasm. It carries out the reaction octanoyl-[ACP] + L-lysyl-[protein] = N(6)-octanoyl-L-lysyl-[protein] + holo-[ACP] + H(+). The protein operates within protein modification; protein lipoylation via endogenous pathway; protein N(6)-(lipoyl)lysine from octanoyl-[acyl-carrier-protein]: step 1/2. In terms of biological role, catalyzes the transfer of endogenously produced octanoic acid from octanoyl-acyl-carrier-protein onto the lipoyl domains of lipoate-dependent enzymes. Lipoyl-ACP can also act as a substrate although octanoyl-ACP is likely to be the physiological substrate. This Colwellia psychrerythraea (strain 34H / ATCC BAA-681) (Vibrio psychroerythus) protein is Octanoyltransferase.